Reading from the N-terminus, the 282-residue chain is Elongation factor Ts (282 aa).

The involved in Mg(2+) ion dislocation from EF-Tu stretch occupies residues 80–83 (TDFV).

This sequence belongs to the EF-Ts family.

The protein localises to the cytoplasm. In terms of biological role, associates with the EF-Tu.GDP complex and induces the exchange of GDP to GTP. It remains bound to the aminoacyl-tRNA.EF-Tu.GTP complex up to the GTP hydrolysis stage on the ribosome. The chain is Elongation factor Ts from Chlamydia trachomatis serovar L2 (strain ATCC VR-902B / DSM 19102 / 434/Bu).